We begin with the raw amino-acid sequence, 556 residues long: WD repeat-containing protein srw1 (556 aa).

The tract at residues 1–80 (MDEFDGFTRP…NEGDRFIPSR (80 aa)) is disordered. The span at 12–37 (SSNSSANRNSNNSMNRVENNNSNSDS) shows a compositional bias: low complexity. Positions 43–55 (SRGDAHTRMRQGF) are enriched in basic and acidic residues. Ser-62 bears the Phosphoserine mark. Residues 69 to 78 (RTNEGDRFIP) show a composition bias toward basic and acidic residues. Thr-98 is subject to Phosphothreonine. Positions 126–146 (TFNNSPIATPNTTIGVSTPRT) are enriched in polar residues. Residues 126-173 (TFNNSPIATPNTTIGVSTPRTDSGIDDIELTQRTPPSSSHTSSSILQN) are disordered. Residues 159–169 (TPPSSSHTSSS) show a composition bias toward low complexity. At Thr-177 the chain carries Phosphothreonine. A phosphoserine mark is found at Ser-187 and Ser-214. WD repeat units follow at residues 246-285 (GLAG…VTVM), 289-328 (YPTD…KTRT), 331-368 (GHTE…HYFR), 372-411 (AHRQ…PLYS), 414-456 (NHIA…MLHN), 458-499 (DTGS…RVGT), and 502-541 (GHTD…SKHS).

The protein belongs to the WD repeat CDC20/Fizzy family. In terms of processing, phosphorylated by cdc2-cdc13-CDK complex. This targets srw1 for proteolysis which in turn promotes cdc13 turnover. Dephosphorylated during G1 arrest.

It localises to the nucleus. Its function is as follows. Has a role in cell differentiation and cell cycling by negatively regulating cig2 and cdc12-associated cdc2. Down-regulates the level of cdc13, particularly in a nitrogen deprived environment. Regulator of cell cycle G1 phase progression. Prevents onset of mitosis during the pre-Start G1 period. Required for degradation of cdc13 mitotic cyclin B during G1 arrest but not during mitotic exit. The sequence is that of WD repeat-containing protein srw1 (srw1) from Schizosaccharomyces pombe (strain 972 / ATCC 24843) (Fission yeast).